Here is a 174-residue protein sequence, read N- to C-terminus: Ribosome maturation factor RimP (174 aa).

The protein belongs to the RimP family.

The protein resides in the cytoplasm. Required for maturation of 30S ribosomal subunits. The chain is Ribosome maturation factor RimP from Bdellovibrio bacteriovorus (strain ATCC 15356 / DSM 50701 / NCIMB 9529 / HD100).